Reading from the N-terminus, the 98-residue chain is NADH-ubiquinone oxidoreductase chain 4L (98 aa).

Helical transmembrane passes span 1–21, 26–46, and 56–76; these read MSPL…GLAF, LISA…PLSI, and FALV…TGLA.

The protein belongs to the complex I subunit 4L family. As to quaternary structure, core subunit of respiratory chain NADH dehydrogenase (Complex I) which is composed of 45 different subunits.

It localises to the mitochondrion inner membrane. The enzyme catalyses a ubiquinone + NADH + 5 H(+)(in) = a ubiquinol + NAD(+) + 4 H(+)(out). Functionally, core subunit of the mitochondrial membrane respiratory chain NADH dehydrogenase (Complex I) which catalyzes electron transfer from NADH through the respiratory chain, using ubiquinone as an electron acceptor. Part of the enzyme membrane arm which is embedded in the lipid bilayer and involved in proton translocation. The polypeptide is NADH-ubiquinone oxidoreductase chain 4L (MT-ND4L) (Gallus gallus (Chicken)).